A 219-amino-acid polypeptide reads, in one-letter code: ATP-dependent Clp protease proteolytic subunit 4 (219 aa).

The Nucleophile role is filled by serine 125. Residue histidine 150 is part of the active site.

Belongs to the peptidase S14 family. As to quaternary structure, fourteen ClpP subunits assemble into 2 heptameric rings which stack back to back to give a disk-like structure with a central cavity, resembling the structure of eukaryotic proteasomes.

The protein localises to the cytoplasm. It catalyses the reaction Hydrolysis of proteins to small peptides in the presence of ATP and magnesium. alpha-casein is the usual test substrate. In the absence of ATP, only oligopeptides shorter than five residues are hydrolyzed (such as succinyl-Leu-Tyr-|-NHMec, and Leu-Tyr-Leu-|-Tyr-Trp, in which cleavage of the -Tyr-|-Leu- and -Tyr-|-Trp bonds also occurs).. Its function is as follows. Cleaves peptides in various proteins in a process that requires ATP hydrolysis. Has a chymotrypsin-like activity. Plays a major role in the degradation of misfolded proteins. The polypeptide is ATP-dependent Clp protease proteolytic subunit 4 (Prochlorococcus marinus (strain MIT 9312)).